The chain runs to 447 residues: Methylenetetrahydrofolate--tRNA-(uracil-5-)-methyltransferase TrmFO (447 aa).

Position 8–13 (8–13 (GGGLAG)) interacts with FAD. The interval 398-421 (NWGLVPAPPKRENGRRLGRQERRR) is disordered. The segment covering 406–417 (PKRENGRRLGRQ) has biased composition (basic and acidic residues).

It belongs to the MnmG family. TrmFO subfamily. Requires FAD as cofactor.

Its subcellular location is the cytoplasm. It carries out the reaction uridine(54) in tRNA + (6R)-5,10-methylene-5,6,7,8-tetrahydrofolate + NADH + H(+) = 5-methyluridine(54) in tRNA + (6S)-5,6,7,8-tetrahydrofolate + NAD(+). It catalyses the reaction uridine(54) in tRNA + (6R)-5,10-methylene-5,6,7,8-tetrahydrofolate + NADPH + H(+) = 5-methyluridine(54) in tRNA + (6S)-5,6,7,8-tetrahydrofolate + NADP(+). Functionally, catalyzes the folate-dependent formation of 5-methyl-uridine at position 54 (M-5-U54) in all tRNAs. This chain is Methylenetetrahydrofolate--tRNA-(uracil-5-)-methyltransferase TrmFO, found in Rubrobacter xylanophilus (strain DSM 9941 / JCM 11954 / NBRC 16129 / PRD-1).